The primary structure comprises 810 residues: Leucine--tRNA ligase (810 aa).

The 'HIGH' region motif lies at 41 to 52 (PYPSGQGLHVGH). Positions 582-586 (KMSKS) match the 'KMSKS' region motif. Residue Lys-585 participates in ATP binding.

The protein belongs to the class-I aminoacyl-tRNA synthetase family.

It localises to the cytoplasm. It carries out the reaction tRNA(Leu) + L-leucine + ATP = L-leucyl-tRNA(Leu) + AMP + diphosphate. The protein is Leucine--tRNA ligase of Oenococcus oeni (strain ATCC BAA-331 / PSU-1).